Consider the following 292-residue polypeptide: uncharacterized protein (292 aa).

The signal sequence occupies residues M1–A19. A disordered region spans residues K271–K292.

This is an uncharacterized protein from Rickettsia bellii (strain RML369-C).